A 138-amino-acid polypeptide reads, in one-letter code: Putative pre-16S rRNA nuclease (138 aa).

Belongs to the YqgF nuclease family.

The protein resides in the cytoplasm. Could be a nuclease involved in processing of the 5'-end of pre-16S rRNA. The chain is Putative pre-16S rRNA nuclease from Shigella dysenteriae serotype 1 (strain Sd197).